The sequence spans 189 residues: NADH-quinone oxidoreductase subunit B (189 aa).

The [4Fe-4S] cluster site is built by Cys-39, Cys-40, Cys-104, and Cys-135.

Belongs to the complex I 20 kDa subunit family. As to quaternary structure, NDH-1 is composed of 14 different subunits. Subunits NuoB, C, D, E, F, and G constitute the peripheral sector of the complex. [4Fe-4S] cluster serves as cofactor.

The protein localises to the cell inner membrane. The catalysed reaction is a quinone + NADH + 5 H(+)(in) = a quinol + NAD(+) + 4 H(+)(out). Functionally, NDH-1 shuttles electrons from NADH, via FMN and iron-sulfur (Fe-S) centers, to quinones in the respiratory chain. The immediate electron acceptor for the enzyme in this species is believed to be a menaquinone. Couples the redox reaction to proton translocation (for every two electrons transferred, four hydrogen ions are translocated across the cytoplasmic membrane), and thus conserves the redox energy in a proton gradient. This Chlorobium luteolum (strain DSM 273 / BCRC 81028 / 2530) (Pelodictyon luteolum) protein is NADH-quinone oxidoreductase subunit B.